Consider the following 61-residue polypeptide: MTNMKSVEAYQQLDNQNLKKVVGGKYYGNGVHCTKSGCSVNWGEAASAGIHRLANGGNGFW.

Residues 1 to 24 (MTNMKSVEAYQQLDNQNLKKVVGG) form the signal peptide. C33 and C38 are oxidised to a cystine.

This sequence belongs to the bacteriocin class IIA/YGNGV family.

Its subcellular location is the secreted. Bacteriocin active against Listeria monocytogenes. The chain is Bacteriocin mesentericin Y105 (mesY) from Leuconostoc mesenteroides.